We begin with the raw amino-acid sequence, 108 residues long: UPF0060 membrane protein RHOS4_03690 (108 aa).

A run of 4 helical transmembrane segments spans residues 5 to 25 (LAAY…VWAW), 32 to 52 (ALWL…LALT), 62 to 82 (AVYG…VEGV), and 86 to 106 (RWDM…LWAP).

Belongs to the UPF0060 family.

It localises to the cell inner membrane. This is UPF0060 membrane protein RHOS4_03690 from Cereibacter sphaeroides (strain ATCC 17023 / DSM 158 / JCM 6121 / CCUG 31486 / LMG 2827 / NBRC 12203 / NCIMB 8253 / ATH 2.4.1.) (Rhodobacter sphaeroides).